The sequence spans 270 residues: Ribosomal RNA-processing protein 7 homolog (270 aa).

The stretch at 233 to 268 (TFQIKKNRQEKAQELLKKFEEDRKRITQLKQARNFK) forms a coiled coil.

Belongs to the RRP7 family.

The polypeptide is Ribosomal RNA-processing protein 7 homolog (Caenorhabditis elegans).